The sequence spans 312 residues: Pollen allergen Phl p 5.0101 (312 aa).

A signal peptide spans 1 to 25 (MAVHQYTVALFLAVALVAGPAASYA).

Belongs to the Poa p IX/Phl p VI allergen family.

The protein resides in the secreted. The sequence is that of Pollen allergen Phl p 5.0101 from Phleum pratense (Common timothy).